We begin with the raw amino-acid sequence, 82 residues long: Auxin-induced protein 15A (82 aa).

This sequence belongs to the ARG7 family.

The protein is Auxin-induced protein 15A of Glycine max (Soybean).